The following is a 120-amino-acid chain: Acylphosphatase-1 (120 aa).

Ala2 is modified (N-acetylalanine). The 91-residue stretch at 8–98 (SCEFEVFGRV…YGYANFHIKP (91 aa)) folds into the Acylphosphatase-like domain. Active-site residues include Arg23 and Asn41. The disordered stretch occupies residues 91-120 (YANFHIKPDPHENRPVHEGLGSSSSHHDSN). Basic and acidic residues predominate over residues 96–107 (IKPDPHENRPVH).

This sequence belongs to the acylphosphatase family.

The protein resides in the cytoplasm. The enzyme catalyses an acyl phosphate + H2O = a carboxylate + phosphate + H(+). The sequence is that of Acylphosphatase-1 (Acyp) from Drosophila melanogaster (Fruit fly).